The following is a 208-amino-acid chain: MASYHQQQGGSTFMAIPTINFQMYSEIAGDDEWWEYIPCPFCYIEVEVHFLCDHLQEEHCFDMKNAVCPICADNLDKDTDEHFRVQHSHLLKRRKSSSFSCKPSSAAADKGSYEEDSYFEAPSHCMGRPAPDSSPDPLLSQFICCSLAPPVDSPRRSEADAEGHGSSSSDDQKRREQGVMDDASKEELEERLQRIEFVKQMLMTTIAY.

The tract at residues 151–190 (VDSPRRSEADAEGHGSSSSDDQKRREQGVMDDASKEELEE) is disordered. Basic and acidic residues-rich tracts occupy residues 153–163 (SPRRSEADAEG) and 170–190 (DDQK…ELEE).

Belongs to the Di19 family.

The polypeptide is Protein DEHYDRATION-INDUCED 19 homolog 6 (DI19-6) (Oryza sativa subsp. japonica (Rice)).